Reading from the N-terminus, the 193-residue chain is Putative manganese efflux pump MntP (193 aa).

Transmembrane regions (helical) follow at residues 6-26, 39-59, 61-81, 106-126, 132-152, and 165-185; these read VVFV…GIAC, VAGT…YAGL, IADV…TVIG, LGLL…GLTF, NIGL…YLGF, and WVGI…LAEH.

The protein belongs to the MntP (TC 9.B.29) family.

It is found in the cell membrane. Probably functions as a manganese efflux pump. This is Putative manganese efflux pump MntP from Dehalococcoides mccartyi (strain ATCC BAA-2266 / KCTC 15142 / 195) (Dehalococcoides ethenogenes (strain 195)).